Here is a 167-residue protein sequence, read N- to C-terminus: ATP synthase subunit b (167 aa).

A helical transmembrane segment spans residues Ser-7 to Ala-25.

The protein belongs to the ATPase B chain family. As to quaternary structure, F-type ATPases have 2 components, F(1) - the catalytic core - and F(0) - the membrane proton channel. F(1) has five subunits: alpha(3), beta(3), gamma(1), delta(1), epsilon(1). F(0) has three main subunits: a(1), b(2) and c(10-14). The alpha and beta chains form an alternating ring which encloses part of the gamma chain. F(1) is attached to F(0) by a central stalk formed by the gamma and epsilon chains, while a peripheral stalk is formed by the delta and b chains.

The protein localises to the cell inner membrane. F(1)F(0) ATP synthase produces ATP from ADP in the presence of a proton or sodium gradient. F-type ATPases consist of two structural domains, F(1) containing the extramembraneous catalytic core and F(0) containing the membrane proton channel, linked together by a central stalk and a peripheral stalk. During catalysis, ATP synthesis in the catalytic domain of F(1) is coupled via a rotary mechanism of the central stalk subunits to proton translocation. In terms of biological role, component of the F(0) channel, it forms part of the peripheral stalk, linking F(1) to F(0). This Rickettsia prowazekii (strain Madrid E) protein is ATP synthase subunit b.